A 3563-amino-acid chain; its full sequence is MSISVPEKLQDLTAVKSPSAFGNSIESINGDKNKSERHTASSSAVSTYEIGHPCLLTNFKLAVACSGPAITKVATVNDKDSGAKLKNVINGKDISASEVFKGAWAVVLGTYLAKSHVSLDYGVMKPKGLGPETSCNARVPSENSEMSTSSFLLRANDTLLDIIRQNSMCAHTELRQKSSLDDVESPKRCNTCVIYWPEISCSEQLQIDAWMTILEENDQLTQYDCMIHFASDMRCMLSYRDQFMSESQARHLAATMRVVLSSIASAPQQSLADVDVCSSLDYRTLSRWNFKAPIVSEVCVHDLIEKSCSPRPNPQAVVSWDGCLTYNEMDRLSSHLAQRLRDAGVEPGVFVALCLDRCKWAVIGIVAVMKAGGAFCALDPSYPVSRLKEMCRDLGITIVLTVKSNIQHASPLASKVFALDDDVYFESALSSAHESASWVNVSPHDPVYAVFTSGSTGKPKGIIMEHASFSACALSSVKPLQIADQDRVLHFASYAFDASVIEILAPLIAGATVAIPSERARLEDLPRAMTDLKATWAFLTPTVARLYRPEQMPTLKTLCLGGEAVNASDTRSWSSKNLISGYNPAECCPLGISGPLNDRMPRSLGSTFASQTAWIVDPKDHEKLLPAGAIGELAIEGPVVARGYIHDVTCSDPSTPFVVKPPPWLRRFRATANRGNRIYLTGDLARLDCDDGSVHYLGRKDDQVKIHGQRVELAEIEHHLEQHFVSLATKVVVMLLRPISGRTVLAALIMPHQRLQHGDKSLESLLMEPGDVSQDFRANLASAASKLRLALPSHMVPSVYLPIRHFPTTKGGKIDRGHLQSLLLSLPPECLYGSEEATTRRGEEPKSDREKLLQALFAQSLDLPRTRIDLDSNFFQLGGDSLSAMKLLALALEEGISSIAYQDIFSHPTLREIVIVSTSATSREPLSSETVETPPFSLIKDPEMLIQIASEQCGSGVGKADIEDIYPCTHLQQSLMASTAHNPNAYVAILAFKLKSGVDRTRLERAWHIACSGHTILRTRLVQTDTGDCYQVVVKQPPHWTETNEVSDDGSTDSLLRTSFGLGRPLIQSHLSTDQLFVAMHHALYDGWSLPMLIGELDLAYRELSVRRLPCLKNYVKYTMDSADAAASFWQAELQDADPVHFPAPSSLDYKPQPCAAMTVSVPLVNSPRRNVTLATEIQFAWAMTVYTYTGCKDVIFGLISSGRAAPVAQIESMLGPTFASTPLRVSIDPQGKLGEALDDLQYTIVEQSMFVHFGAQAIRQLGPNAAAACNFQTVLAVETAGPDTGVEEGSWFTGYDFLSDLASFSSHALTLRCKLSAKGVEINAVYDKAVVDERQMGRILAQFEHILTEIHSNETIHDDIGSLDKLSRSDWRELQAWNSDLPPPHPKGLGAHQVIQEKCQAQPDATAIDAWDGSVTYDELERRAEKLAGLVRSYVSKPDQVVVLYFSKSRLTVVTQLAILKAGAAFITLDITQPPHHLRRIIAALGPALILVLTSDELLSAAEELQEGAAVMAVDKDHLSNGIIASQTSSSACAVECELMYVVATSGTTGVPKIIMTNHQSFMTNASPLMNRMGITAESRVFQFCGYSFDLMIAEHFLTLLAGGCICIPSLHNRNNRFAASIVEFKANWIGAPSSVLQLLDPQTVPTVKTIMQGGERLQQGLVDRWAPSARLINAYGPAECSVAALVSDTVRPDTENVQNLGFATGSVCWIVNADTEGKLLPVPIGAEGELLIEGHTLSRGYLGDLDKTNAVFLALPDWLRDFRADCNQGQGHRAYLTGDIVRQNSDGSISFVRRKDAQVKIRGQRVELADVEHQVERCFAGSHQVVTDIVQISDSQSSILVALVLTKDVMTNYKQQESLLDQKSAGGLSILAPTSSFTANANAAETALQDRIPAYMVPDLFVPVSDFPREASGKVGRRTIKQYLASLTQQDWSRYSLTRKVPPSNATEHEILAIWARVLRIEPHTFGVHDSFFRLGGDSISSMRVAAACGVAGISVTVKDMFEYRTIRKLALARGVTQQMDVATTSTEANASVVSQKKAPHIFYPEGRLEIYMERMQSRLGQAIERIYPCSPIQQGILMSHARNAHHYDEVIQWRVAGDVWCDISRMQRAWREVVSRHGILRTLFLQVSEDSFLDQVVLKNYSPHISVYTDGEDWEAYRPFEDSVPMHQLLVIQRSADDVTVSLRIHHALVDGLSLHIIRRDLEHAYQGCLDDLVEPPAYHEYISYLQEKRLQESPKEYWKSYLQGATGALFPAVQDEPAEDGQYFGVVEIELGPSAKLTQFCEEHKLGMTVVLHVVWAIIVQRYTATDEVCFGFMTSGRHVPVANVENMVGPLFNMLIGRVKLAYNLSLLSTMYEYQENFINSLDHQQQSLVESLHSIGSSAGDLFNTLITVFNDQPEGHASQQQSTLRLVGDIVQSRSEYPITLNIVSCADKIKMQLSYHAILLNSVSANAIAEAFRFVLQRTLERPHELLRALPVLDEDQMNSVFEKNSSVPPQVEELIHDTIHQQCIRCPDSPSVCAWDGNFTYRQLDELSSALSREIVRKGAGPEVTIPIVLEKTRWTPVAMLAVLKSGSSFVLMDSTHPAVRVGSIVQAIGPPVIIVSAQTRSKVATFSTDVVEVGDWLAREILVAKQHVTRQNGLLQATNAAYLVFTSGSTGKPKGAIVEHASLSTAAKYMASRLHIDSASRVLQFSSHAWDIPVTEVLVTLRMGGCVCVPSEEERTGNLAKASERMKVNWALWTPTVARLFKPEEFPHLKTLVFAGEALSATDLETWCDRVRLVQGYGPAECSLISTVTDPLTRSDNPRCIGLPSGCVAWVVNRDNHELLAPPGATGELVLEGPIVGRGYLGDPGRAASAFISPPAWLMRLRGSGSSNRLYKTGDLVRQHVSSGLLTFVGRNDDQVKVRGQRVEPGEVEGQVAQVFPGSQVIVLVVKKSAGAVLAALVLQNGEDRSSAGETANLFPPPSLAFAALAKAAFSKLREDHAYAATGKADRNLLRDRVASLSAEEDRGICGGPVCRPGPPRTALEAELPRLVGQVLPKASSFPFPLDEDPIPDLGMDSPPGPDPLASSCAPTWVGGFRSNHFPALATVRFGSYRRAGAARNQFTESARRSSCYINKRLVSLLPEICTKWDLREDQITHIAPTTYYQHMALASDHEAFFGLYFSKPMASEALKAAASRVVNLHSILRTAFVPLEDTYVQLTLCDFDLPSQEIQTNEAEVSAAMELFCRDAADKTAGFGVPVTKLILMLDRQGDCLSLLLRLQRAQFDGVSVMRIMADWRSALEHASCSWEPAPSLDYADFALARVAQNTPDVFGMWRDQEYISMTDRGHAERLVTSSCDIPLPEPAPGYTMATVAKAAWAICLARETESEDLLFLQLVRNRHLALDGIDKMVGCSLNYVPVRVPLRRDWKISDLLHWLHQQHIRTMAGDTADWPDVVAKSTTWSSDTEFGSVIHYLSAPAAPVYHFPGDTVAQFQLYDEKMTHTCPLVTCIEFPGPTEQSGRQMKILVTSAVGGQDMVDRLLAVFRSLLCEANAQLDQSVSNILQGLRDGDDAMGKAR.

Residues 307–706 are adenylation (A) domain 1; the sequence is SCSPRPNPQA…LGRKDDQVKI (400 aa). Residues 844–921 enclose the Carrier 1 domain; the sequence is EPKSDREKLL…EIVIVSTSAT (78 aa). Position 881 is an O-(pantetheine 4'-phosphoryl)serine (Ser881). The condensation (C) domain 1 stretch occupies residues 963–1354; the sequence is EDIYPCTHLQ…EHILTEIHSN (392 aa). Residues 1397–1804 form an adenylation (A) domain 2 region; the sequence is QEKCQAQPDA…RRKDAQVKIR (408 aa). The Carrier 2 domain occupies 1944 to 2020; the sequence is PPSNATEHEI…KLALARGVTQ (77 aa). Ser1981 bears the O-(pantetheine 4'-phosphoryl)serine mark. A condensation (C) domain 2 region spans residues 2067–2486; sequence ERIYPCSPIQ…ALPVLDEDQM (420 aa). The segment at 2511-2909 is adenylation (A) domain 3; the sequence is QCIRCPDSPS…GRNDDQVKVR (399 aa). A Carrier 3 domain is found at 3025–3104; sequence PPRTALEAEL…RFGSYRRAGA (80 aa). Ser3064 is subject to O-(pantetheine 4'-phosphoryl)serine. Residues 3166-3451 are cyclization (Cyc) domain; that stretch reads LYFSKPMASE…VAKSTTWSSD (286 aa).

This sequence belongs to the NRP synthetase family.

Its pathway is alkaloid biosynthesis; ergot alkaloid biosynthesis. In terms of biological role, D-lysergyl-peptide-synthetase subunit 1; part of the gene cluster that mediates the biosynthesis of fungal ergot alkaloid. DmaW catalyzes the first step of ergot alkaloid biosynthesis by condensing dimethylallyl diphosphate (DMAP) and tryptophan to form 4-dimethylallyl-L-tryptophan. The second step is catalyzed by the methyltransferase easF that methylates 4-dimethylallyl-L-tryptophan in the presence of S-adenosyl-L-methionine, resulting in the formation of 4-dimethylallyl-L-abrine. The catalase easC and the FAD-dependent oxidoreductase easE then transform 4-dimethylallyl-L-abrine to chanoclavine-I which is further oxidized by easD in the presence of NAD(+), resulting in the formation of chanoclavine-I aldehyde. Agroclavine dehydrogenase easG then mediates the conversion of chanoclavine-I aldehyde to agroclavine via a non-enzymatic adduct reaction: the substrate is an iminium intermediate that is formed spontaneously from chanoclavine-I aldehyde in the presence of glutathione. The presence of easA is not required to complete this reaction. Further conversion of agroclavine to paspalic acid is a two-step process involving oxidation of agroclavine to elymoclavine and of elymoclavine to paspalic acid, the second step being performed by the elymoclavine oxidase cloA. Paspalic acid is then further converted to D-lysergic acid. Ergopeptines are assembled from D-lysergic acid and three different amino acids by the D-lysergyl-peptide-synthetases composed each of a monomudular and a trimodular nonribosomal peptide synthetase subunit. LpsB and lpsC encode the monomodular subunits responsible for D-lysergic acid activation and incorporation into the ergopeptine backbone. LpsA1 and A2 subunits encode the trimodular nonribosomal peptide synthetase assembling the tripeptide portion of ergopeptines. LpsA1 is responsible for formation of the major ergopeptine, ergotamine, and lpsA2 for alpha-ergocryptine, the minor ergopeptine of the total alkaloid mixture elaborated by C.purpurea. D-lysergyl-tripeptides are assembled by the nonribosomal peptide synthetases and released as N-(D-lysergyl-aminoacyl)-lactams. Cyclolization of the D-lysergyl-tripeptides is performed by the Fe(2+)/2-ketoglutarate-dependent dioxygenase easH which introduces a hydroxyl group into N-(D-lysergyl-aminoacyl)-lactam at alpha-C of the aminoacyl residue followed by spontaneous condensation with the terminal lactam carbonyl group. This Claviceps purpurea (Ergot fungus) protein is D-lysergyl-peptide-synthetase subunit 1.